The sequence spans 455 residues: Golgi pH regulator (455 aa).

The next 2 membrane-spanning stretches (helical) occupy residues 5–25 and 46–66; these read IDSSIMVTSQVLFFGFGWLFF and VTFAFSCTMFELIIFEILGVL. Residue Asn67 is glycosylated (N-linked (GlcNAc...) asparagine). The next 3 helical transmembrane spans lie at 79-99, 111-131, and 150-170; these read LCVILLILVFMVPFYIGYFVV, LFACVLWLTFMYFFWKLGDPF, and VGVIGVTLMALLSGFGAVNCP. N-linked (GlcNAc...) asparagine glycosylation is found at Asn180 and Asn243. A run of 4 helical transmembrane segments spans residues 290–310, 343–363, 378–398, and 425–445; these read GYFFSIYCVWKIFMATINIVF, ISFILVGIIIVTSIRGLLITL, VIVLLLAQIMGMYFVSSVLLI, and WFDVIFLVSALSSILFLYLAH.

This sequence belongs to the Golgi pH regulator (TC 1.A.38) family. In terms of assembly, homotrimer.

Its subcellular location is the golgi apparatus membrane. The catalysed reaction is iodide(out) = iodide(in). The enzyme catalyses chloride(in) = chloride(out). It carries out the reaction bromide(in) = bromide(out). It catalyses the reaction fluoride(in) = fluoride(out). Voltage-gated channel that enables the transfer of anions such as iodide, chloride, bromide and fluoride which may function in counter-ion conductance and participates in Golgi acidification. This Gallus gallus (Chicken) protein is Golgi pH regulator.